The primary structure comprises 294 residues: Phosphoribosylaminoimidazole-succinocarboxamide synthase (294 aa).

The protein belongs to the SAICAR synthetase family.

The catalysed reaction is 5-amino-1-(5-phospho-D-ribosyl)imidazole-4-carboxylate + L-aspartate + ATP = (2S)-2-[5-amino-1-(5-phospho-beta-D-ribosyl)imidazole-4-carboxamido]succinate + ADP + phosphate + 2 H(+). Its pathway is purine metabolism; IMP biosynthesis via de novo pathway; 5-amino-1-(5-phospho-D-ribosyl)imidazole-4-carboxamide from 5-amino-1-(5-phospho-D-ribosyl)imidazole-4-carboxylate: step 1/2. This is Phosphoribosylaminoimidazole-succinocarboxamide synthase from Thermoplasma acidophilum (strain ATCC 25905 / DSM 1728 / JCM 9062 / NBRC 15155 / AMRC-C165).